The chain runs to 475 residues: Ataxin-10 (475 aa).

Arg-10 is subject to Omega-N-methylarginine. A phosphoserine mark is found at Ser-12 and Ser-77. The residue at position 82 (Thr-82) is a Phosphothreonine. The residue at position 430 (Ser-430) is a Phosphoserine.

This sequence belongs to the ataxin-10 family. In terms of assembly, homooligomer. Interacts with GNB2. Interacts with IQCB1. Interacts with OGT. Interacts with PLK1. Polyubiquitinated. In terms of processing, phosphorylation at Ser-12 by AURKB promotes the association of ATXN10 with PLK1. Phosphorylation at Ser-77 and Thr-82 by PLK1 may play a role in the regulation of cytokinesis and may stimulate the proteasome-mediated degradation of ATXN10. In terms of tissue distribution, in high cell density areas; cerebellar cortex, dentate gyrus, hippocampus, anterior olfactory nucleus, primary olfactory cortex.

It localises to the cytoplasm. Its subcellular location is the perinuclear region. The protein resides in the midbody. The protein localises to the cytoskeleton. It is found in the cilium basal body. It localises to the microtubule organizing center. Its subcellular location is the centrosome. The protein resides in the centriole. May play a role in the regulation of cytokinesis. May play a role in signaling by stimulating protein glycosylation. Induces neuritogenesis by activating the Ras-MAP kinase pathway and is necessary for the survival of cerebellar neurons. Does not appear to play a major role in ciliogenesis. This is Ataxin-10 (Atxn10) from Mus musculus (Mouse).